The following is a 612-amino-acid chain: Chaperone protein DnaK (612 aa).

At Thr-173 the chain carries Phosphothreonine; by autocatalysis. The tract at residues 576-612 is disordered; that stretch reads AAKQAQAQQDGGAGAKKADDNVVDAEYEEVNDDKDQK. Residues 596 to 612 are compositionally biased toward acidic residues; that stretch reads NVVDAEYEEVNDDKDQK.

Belongs to the heat shock protein 70 family.

In terms of biological role, acts as a chaperone. The polypeptide is Chaperone protein DnaK (Bacillus licheniformis (strain ATCC 14580 / DSM 13 / JCM 2505 / CCUG 7422 / NBRC 12200 / NCIMB 9375 / NCTC 10341 / NRRL NRS-1264 / Gibson 46)).